We begin with the raw amino-acid sequence, 151 residues long: Sigma factor binding protein 1, chloroplastic (151 aa).

The segment covering 1–13 (MESSSSTFLTTTS) has biased composition (low complexity). 2 disordered regions span residues 1–41 (MESS…KPIK) and 66–93 (TGQDAVDLQPEPIYSPSSDDHNLSPPAE). The N-terminal 54 residues, 1-54 (MESSSSTFLTTTSLDKKKPSPVSRKSPKQKKKTTSTNKPIKVRYISNPMRVQTC), are a transit peptide targeting the chloroplast. The short motif at 16-32 (KKKPSPVSRKSPKQKKK) is the Bipartite nuclear localization signal element. Residues 58 to 67 (FRELVQELTG) carry the VQ motif.

Interacts with the sigma factor SIGA in chloroplast. Interacts with WRKY25 and WRKY33 in the nucleus. In terms of tissue distribution, expressed in leaves and roots, but not in flowers.

The protein localises to the plastid. The protein resides in the chloroplast. Its subcellular location is the nucleus. Functionally, contributes to plant defense. May regulate chloroplast metabolism upon infection with pathogens such as Pseudomonas syringae. Functions as activator of WRKY33 in plant defense against necrotrophic pathogens by stimulating the DNA-binding activity of WRKY33. In Arabidopsis thaliana (Mouse-ear cress), this protein is Sigma factor binding protein 1, chloroplastic (SIB1).